A 95-amino-acid polypeptide reads, in one-letter code: Aspartyl/glutamyl-tRNA(Asn/Gln) amidotransferase subunit C (95 aa).

It belongs to the GatC family. In terms of assembly, heterotrimer of A, B and C subunits.

The catalysed reaction is L-glutamyl-tRNA(Gln) + L-glutamine + ATP + H2O = L-glutaminyl-tRNA(Gln) + L-glutamate + ADP + phosphate + H(+). The enzyme catalyses L-aspartyl-tRNA(Asn) + L-glutamine + ATP + H2O = L-asparaginyl-tRNA(Asn) + L-glutamate + ADP + phosphate + 2 H(+). Its function is as follows. Allows the formation of correctly charged Asn-tRNA(Asn) or Gln-tRNA(Gln) through the transamidation of misacylated Asp-tRNA(Asn) or Glu-tRNA(Gln) in organisms which lack either or both of asparaginyl-tRNA or glutaminyl-tRNA synthetases. The reaction takes place in the presence of glutamine and ATP through an activated phospho-Asp-tRNA(Asn) or phospho-Glu-tRNA(Gln). The sequence is that of Aspartyl/glutamyl-tRNA(Asn/Gln) amidotransferase subunit C from Lysinibacillus sphaericus (strain C3-41).